Consider the following 366-residue polypeptide: Histidinol-phosphate aminotransferase (366 aa).

Lys-228 bears the N6-(pyridoxal phosphate)lysine mark.

The protein belongs to the class-II pyridoxal-phosphate-dependent aminotransferase family. Histidinol-phosphate aminotransferase subfamily. In terms of assembly, homodimer. Pyridoxal 5'-phosphate serves as cofactor.

It catalyses the reaction L-histidinol phosphate + 2-oxoglutarate = 3-(imidazol-4-yl)-2-oxopropyl phosphate + L-glutamate. It functions in the pathway amino-acid biosynthesis; L-histidine biosynthesis; L-histidine from 5-phospho-alpha-D-ribose 1-diphosphate: step 7/9. The polypeptide is Histidinol-phosphate aminotransferase (Stutzerimonas stutzeri (Pseudomonas stutzeri)).